Reading from the N-terminus, the 306-residue chain is L-lactate dehydrogenase (306 aa).

NAD(+)-binding positions include V11, D32, K37, and 76–77 (GA). Q79 and R85 together coordinate substrate. NAD(+)-binding positions include S98, 115 to 117 (VSN), and S140. 117–120 (NPVD) is a substrate binding site. 145-148 (DTAR) lines the substrate pocket. Beta-D-fructose 1,6-bisphosphate-binding residues include R150 and H165. H172 functions as the Proton acceptor in the catalytic mechanism. Y214 carries the post-translational modification Phosphotyrosine. T223 lines the substrate pocket.

It belongs to the LDH/MDH superfamily. LDH family. In terms of assembly, homotetramer.

It is found in the cytoplasm. It catalyses the reaction (S)-lactate + NAD(+) = pyruvate + NADH + H(+). The protein operates within fermentation; pyruvate fermentation to lactate; (S)-lactate from pyruvate: step 1/1. Its activity is regulated as follows. Allosterically activated by fructose 1,6-bisphosphate (FBP). Functionally, catalyzes the conversion of lactate to pyruvate. In Synechococcus sp. (strain JA-3-3Ab) (Cyanobacteria bacterium Yellowstone A-Prime), this protein is L-lactate dehydrogenase.